A 150-amino-acid polypeptide reads, in one-letter code: MIFTKVDALVKDIDVDKYHIETVILSSDDLNKKIIRVKSDHGNEFGIRLDKGQKLQNGSAFFIDDHHVLVIGVESQDLIVISPKDMDEMGITAHILGNTHKPIEVKDAKIYLEVDPVVEQVLTQKEIAYTIEEVVLDKPLRHVNLTAHEH.

It belongs to the UreE family.

It is found in the cytoplasm. In terms of biological role, involved in urease metallocenter assembly. Binds nickel. Probably functions as a nickel donor during metallocenter assembly. This Streptococcus vestibularis protein is Urease accessory protein UreE.